The following is a 409-amino-acid chain: 5-aminolevulinate synthase (409 aa).

Succinyl-CoA contacts are provided by arginine 21, serine 137, and lysine 156. Pyridoxal 5'-phosphate is bound by residues serine 189, histidine 217, and threonine 245. The active site involves lysine 248. Lysine 248 bears the N6-(pyridoxal phosphate)lysine mark. Pyridoxal 5'-phosphate is bound by residues serine 277 and threonine 278. Threonine 365 lines the succinyl-CoA pocket.

It belongs to the class-II pyridoxal-phosphate-dependent aminotransferase family. As to quaternary structure, homodimer. Pyridoxal 5'-phosphate serves as cofactor.

The catalysed reaction is succinyl-CoA + glycine + H(+) = 5-aminolevulinate + CO2 + CoA. The protein operates within porphyrin-containing compound metabolism; protoporphyrin-IX biosynthesis; 5-aminolevulinate from glycine: step 1/1. This chain is 5-aminolevulinate synthase (hemA), found in Rhodobacter capsulatus (strain ATCC BAA-309 / NBRC 16581 / SB1003).